The sequence spans 488 residues: Glutamyl-tRNA(Gln) amidotransferase subunit A (488 aa).

Residues lysine 77 and serine 152 each act as charge relay system in the active site. The active-site Acyl-ester intermediate is the serine 176.

This sequence belongs to the amidase family. GatA subfamily. As to quaternary structure, heterotrimer of A, B and C subunits.

The enzyme catalyses L-glutamyl-tRNA(Gln) + L-glutamine + ATP + H2O = L-glutaminyl-tRNA(Gln) + L-glutamate + ADP + phosphate + H(+). Its function is as follows. Allows the formation of correctly charged Gln-tRNA(Gln) through the transamidation of misacylated Glu-tRNA(Gln) in organisms which lack glutaminyl-tRNA synthetase. The reaction takes place in the presence of glutamine and ATP through an activated gamma-phospho-Glu-tRNA(Gln). This is Glutamyl-tRNA(Gln) amidotransferase subunit A from Streptococcus suis (strain 05ZYH33).